The primary structure comprises 315 residues: Olfactory receptor 4K3 (315 aa).

Residues 1–25 (MAWSNQSAVTEFILRGLSSSLELQI) lie on the Extracellular side of the membrane. N-linked (GlcNAc...) asparagine glycosylation is present at Asn5. Residues 26 to 49 (FYFLFFSIVYAATVLGNLLIVVTI) form a helical membrane-spanning segment. The Cytoplasmic segment spans residues 50 to 57 (ASEPHLHS). A helical transmembrane segment spans residues 58–79 (PMYFLLGNLSFIDMSLASFATP). Residues 80-100 (KMIADFLREHKAISFEGCMTQ) lie on the Extracellular side of the membrane. Residues Cys97 and Cys189 are joined by a disulfide bond. A helical transmembrane segment spans residues 101–120 (MFFLHLLGGAEIVLLISMSF). At 121–139 (DRYVAICKPLHYLTIMSRR) the chain is on the cytoplasmic side. The helical transmembrane segment at 140–158 (MCVGLVILSWIVGIFHALS) threads the bilayer. At 159–195 (QLAFTVNLPFCGPNEVDSFFCDLPLVIKLACVDTYIL) the chain is on the extracellular side. Residues 196–219 (GVFMISTSGMIALVCFILLVISYT) traverse the membrane as a helical segment. Residues 220 to 235 (IILVTVRQRSSGGSSK) lie on the Cytoplasmic side of the membrane. The helical transmembrane segment at 236-258 (ALSTCSAHFTVVTLFFGPCTFIY) threads the bilayer. The Extracellular segment spans residues 259 to 269 (VWPFTNFPIDK). The helical transmembrane segment at 270-289 (VLSVFYTIYTPLLNPVIYTV) threads the bilayer. At 290 to 315 (RNKDVKYSMRKLSSHIFKSRKTDHTP) the chain is on the cytoplasmic side.

It belongs to the G-protein coupled receptor 1 family.

It is found in the cell membrane. Functionally, odorant receptor. This Homo sapiens (Human) protein is Olfactory receptor 4K3 (OR4K3).